A 162-amino-acid polypeptide reads, in one-letter code: Putative auxin-responsive protein IAA28 (162 aa).

The PB1 domain maps to 23-118 (SRFVKVFMHG…TVKRIYIVPA (96 aa)). The interval 122–141 (NESEYQEEEEDNAAAAATAD) is disordered.

Belongs to the Aux/IAA family. In terms of assembly, homodimers and heterodimers.

It is found in the nucleus. Functionally, aux/IAA proteins are short-lived transcriptional factors that function as repressors of early auxin response genes at low auxin concentrations. The polypeptide is Putative auxin-responsive protein IAA28 (IAA28) (Oryza sativa subsp. japonica (Rice)).